The sequence spans 474 residues: Aspartic-type endopeptidase ctsD (474 aa).

The first 19 residues, 1–19 (MHLLQCLLSTISLASTVTA), serve as a signal peptide directing secretion. Residues 106–413 (YFATVRVGSQ…DYDNHRIGFA (308 aa)) form the Peptidase A1 domain. Asp124 is a catalytic residue. N-linked (GlcNAc...) asparagine glycosylation is found at Asn189, Asn197, Asn275, and Asn301. Asp307 is a catalytic residue. N-linked (GlcNAc...) asparagine glycosylation is found at Asn338, Asn344, and Asn414. Ser452 is lipidated: GPI-anchor amidated serine. The propeptide at 453–474 (ASIVSRFVHWPFIFALLCMVLV) is removed in mature form.

Belongs to the peptidase A1 family.

It is found in the cell membrane. Functionally, secreted aspartic-type endopeptidase which is secreted and contributes to virulence. The sequence is that of Aspartic-type endopeptidase ctsD (ctsD) from Aspergillus fumigatus (strain ATCC MYA-4609 / CBS 101355 / FGSC A1100 / Af293) (Neosartorya fumigata).